We begin with the raw amino-acid sequence, 630 residues long: Alpha-1,3-mannosyltransferase MNT3 (630 aa).

The Cytoplasmic portion of the chain corresponds to 1–14; the sequence is MLKSLKSRRLILKR. The helical; Signal-anchor for type II membrane protein transmembrane segment at 15–31 threads the bilayer; sequence LVTLLLSLFFSYLIFSA. Over 32 to 630 the chain is Lumenal; that stretch reads SRNVTSSNKL…NDISRTWNAN (599 aa). Asn34 and Asn168 each carry an N-linked (GlcNAc...) asparagine glycan.

Belongs to the MNN1/MNT family.

Its subcellular location is the golgi apparatus membrane. It functions in the pathway protein modification; protein glycosylation. Mannosyltransferase involved in adding the 4th and 5th mannose residues of O-linked glycans. In Saccharomyces cerevisiae (strain ATCC 204508 / S288c) (Baker's yeast), this protein is Alpha-1,3-mannosyltransferase MNT3 (MNT3).